Consider the following 66-residue polypeptide: Ocellatin-PT1 (66 aa).

A signal peptide spans 1 to 22; that stretch reads MAFLKKSLFLVLFLGLVSLSIC. A propeptide spanning residues 23–39 is cleaved from the precursor; it reads DEEKRQDEDDDDDDDEE. Val66 bears the Valine amide mark.

Expressed by the skin glands.

The protein localises to the secreted. Its function is as follows. Has antibacterial activity against Gram-negative bacterium E.coli ATCC 25922 (MIC=300 uM) but not against S.pneumoniae ATCC 700603, S.choleraesuis ATCC 14028 or Gram-positive bacterium S.aureus ATCC 29313. Shows virtually no hemolytic activity and no cytotoxicity. The sequence is that of Ocellatin-PT1 from Leptodactylus pustulatus (Ceara white-lipped frog).